Consider the following 366-residue polypeptide: Box C/D snoRNA protein 1 (366 aa).

Zn(2+) is bound by residues Cys-5, Cys-8, Cys-17, Cys-20, Cys-25, Cys-29, His-33, and Cys-39. The HIT-type zinc finger occupies 5–39; that stretch reads CGVCGIKEFKYKCPRCLVQTCSLECSKKHKTRDNC. The segment at 318 to 366 is disordered; sequence DNAREEEDAEEDSQPTEEPVQKETQDASDSDSDSDDDYNPGLSMDFLTA. 2 stretches are compositionally biased toward acidic residues: residues 321–332 and 343–355; these read REEEDAEEDSQP and DASDSDSDSDDDY. Ser-330 carries the phosphoserine modification.

It belongs to the BCD1 family.

It localises to the nucleus. Required for box C/D snoRNAs accumulation involved in snoRNA processing, snoRNA transport to the nucleolus and ribosome biogenesis. The chain is Box C/D snoRNA protein 1 (BCD1) from Saccharomyces cerevisiae (strain ATCC 204508 / S288c) (Baker's yeast).